The following is a 283-amino-acid chain: MKGIARLVTSLSRIGGRKVVSGTSTVTSSSSSSLLLSRRSLFISATNLLNSRTKDSALPSLNSSLLAQKWNFLGGQRRTMFIQTQSTPNPSSLMFYPGKPVMEVGSADFPNVRSALGSPLAKSIYSIDGVVRVFFGSDFVTVTKSDDVSWDILKPEIFAAVMDFYSSGQPLFLDSQAAAAKDTAISEDDSETVAMIKELLETRIRPAVQDDGGDIEYCGFDPESGIVKLRMQGACSGCPSSSVTLKSGIENMLMHYVSEVKGVEQEFDGEDEEGTLSGEMRVE.

The transit peptide at 1-48 (MKGIARLVTSLSRIGGRKVVSGTSTVTSSSSSSLLLSRRSLFISATNL) directs the protein to the mitochondrion.

The protein belongs to the NifU family. As to expression, predominantly expressed in roots.

The protein localises to the mitochondrion. Its function is as follows. Molecular scaffold for [Fe-S] cluster assembly of mitochondrial iron-sulfur proteins. The sequence is that of NifU-like protein 4, mitochondrial (NIFU4) from Arabidopsis thaliana (Mouse-ear cress).